The sequence spans 175 residues: Nucleoside-triphosphatase THEP1 (175 aa).

Residues 15-22 (GNPGVGKT) and 106-113 (VLAIDEIG) each bind ATP.

Belongs to the THEP1 NTPase family.

It carries out the reaction a ribonucleoside 5'-triphosphate + H2O = a ribonucleoside 5'-diphosphate + phosphate + H(+). Has nucleotide phosphatase activity towards ATP, GTP, CTP, TTP and UTP. May hydrolyze nucleoside diphosphates with lower efficiency. The chain is Nucleoside-triphosphatase THEP1 from Saccharolobus solfataricus (strain ATCC 35092 / DSM 1617 / JCM 11322 / P2) (Sulfolobus solfataricus).